The chain runs to 227 residues: General transcription factor 3C polypeptide 6 (227 aa).

Positions 157 to 227 are disordered; sequence DEAAGPASDK…DGNVSQNNQS (71 aa). The segment covering 186–195 has biased composition (basic and acidic residues); it reads EQEKVEHSEV. The span at 203–227 shows a compositional bias: polar residues; it reads ETPSEMESSVFMGTQDGNVSQNNQS.

This sequence belongs to the TFIIIC subunit 6 family. In terms of assembly, part of the TFIIIC subcomplex TFIIIC2, consisting of six subunits, GTF3C1, GTF3C2, GTF3C3, GTF3C4, GTF3C5 and GTF3C6. Interacts with GTF3C4 and GTF3C5.

It is found in the nucleus. Involved in RNA polymerase III-mediated transcription. Integral, tightly associated component of the DNA-binding TFIIIC2 subcomplex that directly binds tRNA and virus-associated RNA promoters. In Mus musculus (Mouse), this protein is General transcription factor 3C polypeptide 6.